A 101-amino-acid chain; its full sequence is Urease subunit beta (101 aa).

The protein belongs to the urease beta subunit family. As to quaternary structure, heterotrimer of UreA (gamma), UreB (beta) and UreC (alpha) subunits. Three heterotrimers associate to form the active enzyme.

It localises to the cytoplasm. It carries out the reaction urea + 2 H2O + H(+) = hydrogencarbonate + 2 NH4(+). The protein operates within nitrogen metabolism; urea degradation; CO(2) and NH(3) from urea (urease route): step 1/1. This is Urease subunit beta from Allorhizobium ampelinum (strain ATCC BAA-846 / DSM 112012 / S4) (Agrobacterium vitis (strain S4)).